The sequence spans 684 residues: DNA helicase IV (684 aa).

The UvrD-like helicase ATP-binding domain maps to 195–505 (SPLNPAQARA…CDLDTTYRFN (311 aa)). Residues 216–223 (AGAGSGKT) and Arg503 contribute to the ATP site.

Belongs to the helicase family. UvrD subfamily.

It catalyses the reaction Couples ATP hydrolysis with the unwinding of duplex DNA by translocating in the 3'-5' direction.. The catalysed reaction is ATP + H2O = ADP + phosphate + H(+). In terms of biological role, helicase IV catalyzes the unwinding of duplex DNA in the 3' to 5' direction with respect to the bound single strand in a reaction that is dependent upon the hydrolysis of ATP. The protein is DNA helicase IV (helD) of Escherichia coli (strain K12).